Here is a 780-residue protein sequence, read N- to C-terminus: MGSGGVIHCRCAKCFCYPTKRRIKRRPRNLTILSLPEDVLFHILKWLSVGDILAVRAVHSHLKYLVDNHASVWASASFQELWPSPQNLKLFERAAEKGNFEAAVKLGIAYLYNEGLSVSDEACAEVNGLKASRFFSMAERLNTGSDPFIWLFIRPPWSVSGSCCKAVVHDSLRAECQLQRSHKASILHCLGRVLNLFEDEEKRKQAHNLFEESAHQGCLASSYLLWESDRKVDMSDPGRCLHSFRKLRDYAAKGCWEAQLALAKACAGGSQLGLEGKACSESVCQLFQASQAVNKQQIFSVQKGLSDTMRYILIDWLVEVATMKDFTSLCLHLTVECVDRYLRRRLVPRYKLQLLGIACMVICTRFISKEILTIREAVWLTDNTYKYEDLVRVMGEIISALEGKIRIPTVVDYKEVLLTLVPVAPRTQHLCSFLCELTLLHTSLSVYAPARLASAALLLARLMHGHTQPWTTQLWDLTGFSYSDLTPCVLSLHKKCFHDDAPKDYRQVSLTAVKQRFEDKCYEEISQEEVLSYAELCSALGVKQESPEPPSFPSSGEIHTFLSSPSGRRSKRKRENSLQEDRGSFVTTPTAELSNQEETLLGSLLDWSLDCCSGYEGDQESEGEKEGDVTAPSGLLDVTVVYLNPEEHCCQESSDEEVWPEDKSHPTPGTQAPPASAPWPLPCNRGDPGKDVTTSGYSSVSSSSPISSLDGGMVGSPRSTSVLSVGSHSSTKPCYHQAKKSCLQCRPPNPPESGAHQQPVKRQNLSVHSDEDTNLGFLKL.

The Nuclear localization signal 1 signature appears at 20–28; the sequence is KRRIKRRPR. The F-box domain occupies 29-76; that stretch reads NLTILSLPEDVLFHILKWLSVGDILAVRAVHSHLKYLVDNHASVWASA. Residues 288–405 enclose the Cyclin N-terminal domain; the sequence is QASQAVNKQQ…EIISALEGKI (118 aa). 3 short sequence motifs (d box) span residues 310 to 313, 343 to 346, and 349 to 352; these read RYIL, RRRL, and RYKL. Disordered stretches follow at residues 544 to 594, 651 to 733, and 745 to 780; these read QESP…AELS, QESS…STKP, and CRPP…FLKL. The Nuclear localization signal 2 signature appears at 568 to 574; it reads RRSKRKR. The tract at residues 582 to 761 is PEST; the sequence is RGSFVTTPTA…ESGAHQQPVK (180 aa). The span at 585 to 594 shows a compositional bias: polar residues; it reads FVTTPTAELS. 2 stretches are compositionally biased toward low complexity: residues 695–708 and 719–731; these read SGYS…PISS and STSV…HSST. Positions 762–765 match the D box 4 motif; that stretch reads RQNL.

It belongs to the cyclin family. Cyclin AB subfamily. Component of the SCF(CCNF) complex consisting of CUL1, RBX1, SKP1 and CCNF. Interacts with SKP1. Interacts with CUL1. Interacts with CCNB1; interaction is required for nuclear localization of CCNB1. Interacts with CCP110; this interaction leads to CCP110 ubiquitination and degradation via the proteasome pathway. Interacts (via the Cyclin N-terminal domain) with MYBL2/BMYB. Interacts with FZR1/CDH1 (via N-terminus). Interacts with RRM2 (via Cy motif and when phosphorylated at 'Thr-33'); the interaction occurs exclusively in G2 and early M. Interacts with CDC6 (via Cy motif); the interaction takes place during G2 and M phase. Post-translationally, degraded when the spindle assembly checkpoint is activated during the G2-M transition. Degradation is not dependent on the proteasome or ubiquitin and depends on the C-terminal PEST sequence. In terms of processing, phosphorylated just before cells enter into mitosis. Ubiquitinated by the anaphase-promoting complex (APC/C); leading to its degradation by the proteasome.

It localises to the nucleus. It is found in the cytoplasm. Its subcellular location is the perinuclear region. The protein resides in the cytoskeleton. The protein localises to the microtubule organizing center. It localises to the centrosome. It is found in the centriole. In terms of biological role, substrate recognition component of a SCF (SKP1-CUL1-F-box protein) E3 ubiquitin-protein ligase complex which mediates the ubiquitination and subsequent proteasomal degradation of target proteins. The SCF(CCNF) E3 ubiquitin-protein ligase complex is an integral component of the ubiquitin proteasome system (UPS) and links proteasome degradation to the cell cycle. Mediates the substrate recognition and the proteasomal degradation of various target proteins involved in the regulation of cell cycle progression and in the maintenance of genome stability. Mediates the ubiquitination and subsequent proteasomal degradation of CP110 during G2 phase, thereby acting as an inhibitor of centrosome reduplication. In G2, mediates the ubiquitination and proteasomal degradation of CDC6, thereby suppressing DNA re-replication and preventing genome instability. Involved in the ubiquitination and degradation of the substrate adapter CDH1 of the anaphase-promoting complex (APC/C), thereby acting as an antagonist of APC/C in regulating G1 progression and S phase entry. May play a role in the G2 cell cycle checkpoint control after DNA damage, possibly by promoting the ubiquitination of MYBL2/BMYB. The chain is Cyclin-F (Ccnf) from Rattus norvegicus (Rat).